A 235-amino-acid chain; its full sequence is MAINALMLSSSRVGNTPYLEHAIEFIKPLSQNTKKWLFIPYAGVSVSHDAYLSMVQQGLADLSLEITSIHQSEDPKQAIRDADGIFVGGGNTFQLLNMLYQHDVLALIREQVQAGKPYVGWSAGSNITGLSIRTTNDMPIVEPPSFNALNLLPFQLNPHYSNYQAPGHNGETRAQRLLEFTVVDPLTPVIAIQEGTALWRQGDSLRLVGNKEGYLFHGKQQEVPLAAGSDLSSYL.

Active-site charge relay system residues include Ser122, Asp137, and His159.

Belongs to the peptidase S51 family.

The protein localises to the cytoplasm. The catalysed reaction is Dipeptidase E catalyzes the hydrolysis of dipeptides Asp-|-Xaa. It does not act on peptides with N-terminal Glu, Asn or Gln, nor does it cleave isoaspartyl peptides.. In terms of biological role, hydrolyzes dipeptides containing N-terminal aspartate residues. May play a role in allowing the cell to use peptide aspartate to spare carbon otherwise required for the synthesis of the aspartate family of amino acids. The protein is Peptidase E of Shewanella denitrificans (strain OS217 / ATCC BAA-1090 / DSM 15013).